The chain runs to 230 residues: Heptaprenylglyceryl phosphate synthase (230 aa).

Residue Lys-12 participates in sn-glycerol 1-phosphate binding. Mg(2+) is bound by residues Asp-14 and Thr-40. Residues 159 to 164 (YIEYSG), Gly-189, and 209 to 210 (GD) each bind sn-glycerol 1-phosphate.

The protein belongs to the GGGP/HepGP synthase family. Group I subfamily. Homodimer. Requires Mg(2+) as cofactor.

The enzyme catalyses sn-glycerol 1-phosphate + all-trans-heptaprenyl diphosphate = 3-heptaprenyl-sn-glycero-1-phosphate + diphosphate. It functions in the pathway membrane lipid metabolism; glycerophospholipid metabolism. Prenyltransferase that catalyzes in vivo the transfer of the heptaprenyl moiety of heptaprenyl pyrophosphate (HepPP; 35 carbon atoms) to the C3 hydroxyl of sn-glycerol-1-phosphate (G1P), producing heptaprenylglyceryl phosphate (HepGP). This reaction is an ether-bond-formation step in the biosynthesis of archaea-type G1P-based membrane lipids found in Bacillales. The sequence is that of Heptaprenylglyceryl phosphate synthase from Staphylococcus aureus (strain Mu3 / ATCC 700698).